The sequence spans 108 residues: Iron-sulfur cluster assembly protein CyaY (108 aa).

Belongs to the frataxin family.

Functionally, involved in iron-sulfur (Fe-S) cluster assembly. May act as a regulator of Fe-S biogenesis. This Pseudomonas paraeruginosa (strain DSM 24068 / PA7) (Pseudomonas aeruginosa (strain PA7)) protein is Iron-sulfur cluster assembly protein CyaY.